We begin with the raw amino-acid sequence, 486 residues long: Photosystem II CP43 reaction center protein (486 aa).

Residues 1–28 constitute a propeptide that is removed on maturation; the sequence is MKVFVHGWQHKISHTRILYSLRRFYHVE. The next 5 helical transmembrane spans lie at 82–106, 147–168, 191–213, 268–288, and 304–325; these read LFEV…PHLA, LIGP…RDKN, KALF…RLIN, KPFA…LSYS, and WYNN…ASQA. Residue Glu-380 coordinates [CaMn4O5] cluster. The chain crosses the membrane as a helical span at residues 460-484; that stretch reads RARAAAAGFEKGINRENEAVLSMRP.

Belongs to the PsbB/PsbC family. PsbC subfamily. As to quaternary structure, PSII is composed of 1 copy each of membrane proteins PsbA, PsbB, PsbC, PsbD, PsbE, PsbF, PsbH, PsbI, PsbJ, PsbK, PsbL, PsbM, PsbT, PsbX, PsbY, PsbZ, Psb30/Ycf12, at least 3 peripheral proteins of the oxygen-evolving complex and a large number of cofactors. It forms dimeric complexes. Binds multiple chlorophylls and provides some of the ligands for the Ca-4Mn-5O cluster of the oxygen-evolving complex. It may also provide a ligand for a Cl- that is required for oxygen evolution. PSII binds additional chlorophylls, carotenoids and specific lipids. is required as a cofactor.

It is found in the plastid. The protein resides in the chloroplast thylakoid membrane. Its function is as follows. One of the components of the core complex of photosystem II (PSII). It binds chlorophyll and helps catalyze the primary light-induced photochemical processes of PSII. PSII is a light-driven water:plastoquinone oxidoreductase, using light energy to abstract electrons from H(2)O, generating O(2) and a proton gradient subsequently used for ATP formation. This Gracilaria tenuistipitata var. liui (Red alga) protein is Photosystem II CP43 reaction center protein.